The following is a 343-amino-acid chain: Ribosomal RNA small subunit methyltransferase C (343 aa).

The protein belongs to the methyltransferase superfamily. RsmC family. As to quaternary structure, monomer.

It localises to the cytoplasm. The catalysed reaction is guanosine(1207) in 16S rRNA + S-adenosyl-L-methionine = N(2)-methylguanosine(1207) in 16S rRNA + S-adenosyl-L-homocysteine + H(+). Its function is as follows. Specifically methylates the guanine in position 1207 of 16S rRNA in the 30S particle. The protein is Ribosomal RNA small subunit methyltransferase C of Escherichia coli O81 (strain ED1a).